A 247-amino-acid chain; its full sequence is Transmembrane protein 69 (247 aa).

5 helical membrane-spanning segments follow: residues 97-117 (ALCV…VMLM), 122-142 (IPIL…FLGG), 159-179 (YLNL…FLIS), 185-205 (AIVT…FLLP), and 216-236 (IVVT…KSSF).

Its subcellular location is the membrane. The sequence is that of Transmembrane protein 69 (TMEM69) from Homo sapiens (Human).